Here is a 340-residue protein sequence, read N- to C-terminus: Probable tRNA pseudouridine synthase B (340 aa).

D82 acts as the Nucleophile in catalysis. In terms of domain architecture, PUA spans 250–325 (LPKVWIKDSA…IAVDVEKVFM (76 aa)).

The protein belongs to the pseudouridine synthase TruB family. Type 2 subfamily.

The enzyme catalyses uridine(55) in tRNA = pseudouridine(55) in tRNA. Its function is as follows. Could be responsible for synthesis of pseudouridine from uracil-55 in the psi GC loop of transfer RNAs. In Pyrococcus furiosus (strain ATCC 43587 / DSM 3638 / JCM 8422 / Vc1), this protein is Probable tRNA pseudouridine synthase B.